Here is a 285-residue protein sequence, read N- to C-terminus: Lipoyl synthase (285 aa).

[4Fe-4S] cluster-binding residues include cysteine 36, cysteine 41, cysteine 47, cysteine 62, cysteine 66, cysteine 69, and serine 275. The Radical SAM core domain maps to 48–264 (FSKKTATFLI…KEYAISIGFK (217 aa)).

Belongs to the radical SAM superfamily. Lipoyl synthase family. The cofactor is [4Fe-4S] cluster.

Its subcellular location is the cytoplasm. The catalysed reaction is [[Fe-S] cluster scaffold protein carrying a second [4Fe-4S](2+) cluster] + N(6)-octanoyl-L-lysyl-[protein] + 2 oxidized [2Fe-2S]-[ferredoxin] + 2 S-adenosyl-L-methionine + 4 H(+) = [[Fe-S] cluster scaffold protein] + N(6)-[(R)-dihydrolipoyl]-L-lysyl-[protein] + 4 Fe(3+) + 2 hydrogen sulfide + 2 5'-deoxyadenosine + 2 L-methionine + 2 reduced [2Fe-2S]-[ferredoxin]. It participates in protein modification; protein lipoylation via endogenous pathway; protein N(6)-(lipoyl)lysine from octanoyl-[acyl-carrier-protein]: step 2/2. In terms of biological role, catalyzes the radical-mediated insertion of two sulfur atoms into the C-6 and C-8 positions of the octanoyl moiety bound to the lipoyl domains of lipoate-dependent enzymes, thereby converting the octanoylated domains into lipoylated derivatives. In Caldicellulosiruptor saccharolyticus (strain ATCC 43494 / DSM 8903 / Tp8T 6331), this protein is Lipoyl synthase.